The chain runs to 156 residues: Small ribosomal subunit protein uS7 (156 aa).

Belongs to the universal ribosomal protein uS7 family. Part of the 30S ribosomal subunit. Contacts proteins S9 and S11.

One of the primary rRNA binding proteins, it binds directly to 16S rRNA where it nucleates assembly of the head domain of the 30S subunit. Is located at the subunit interface close to the decoding center, probably blocks exit of the E-site tRNA. The polypeptide is Small ribosomal subunit protein uS7 (Citrifermentans bemidjiense (strain ATCC BAA-1014 / DSM 16622 / JCM 12645 / Bem) (Geobacter bemidjiensis)).